Consider the following 103-residue polypeptide: Integration host factor subunit alpha (103 aa).

This sequence belongs to the bacterial histone-like protein family. As to quaternary structure, heterodimer of an alpha and a beta chain.

Its function is as follows. This protein is one of the two subunits of integration host factor, a specific DNA-binding protein that functions in genetic recombination as well as in transcriptional and translational control. This chain is Integration host factor subunit alpha, found in Aromatoleum aromaticum (strain DSM 19018 / LMG 30748 / EbN1) (Azoarcus sp. (strain EbN1)).